Here is a 287-residue protein sequence, read N- to C-terminus: Hypersensitive-induced response protein-like protein 2 (287 aa).

Residue glycine 2 is the site of N-myristoyl glycine attachment.

Positive regulator of hypersensitive response (HR)-like cell death. May be involved in potassium ion channel regulation. The sequence is that of Hypersensitive-induced response protein-like protein 2 (HIRL2) from Oryza sativa subsp. japonica (Rice).